A 402-amino-acid chain; its full sequence is Phosphoglycerate kinase (402 aa).

Substrate-binding positions include D24–N26, R40, H63–R66, R122, and R155. Residues K206, G297, E328, and G358–S361 each bind ATP.

It belongs to the phosphoglycerate kinase family. Monomer.

The protein localises to the cytoplasm. It catalyses the reaction (2R)-3-phosphoglycerate + ATP = (2R)-3-phospho-glyceroyl phosphate + ADP. Its pathway is carbohydrate degradation; glycolysis; pyruvate from D-glyceraldehyde 3-phosphate: step 2/5. In Prochlorococcus marinus (strain AS9601), this protein is Phosphoglycerate kinase.